Here is an 83-residue protein sequence, read N- to C-terminus: Small proline-rich protein 2A3 (83 aa).

A run of 5 repeats spans residues 21-29, 30-38, 39-47, 48-56, and 57-65. Residues 21 to 65 form a 5 X 9 AA approximate tandem repeats region; that stretch reads PKCPEPCPPQVWPGPCRPVMCFEPCLPSVWPGPCRPVVCYEQCPP.

The protein belongs to the cornifin (SPRR) family. Forms five pairs of intrachain disulfide bonds.

The protein resides in the secreted. It localises to the extracellular space. Its subcellular location is the cytoplasmic vesicle. The protein localises to the secretory vesicle. Gut bactericidal protein that selectively kills Gram-positive bacteria by binding to negatively charged lipids on bacterial membranes, leading to bacterial membrane permeabilization and disruption. Specifically binds lipids bearing negatively charged headgroups, such as phosphatidic acid, phosphatidylserine (PS), cardiolipin (CL), and phosphatidylinositol phosphates, but not to zwitterionic or neutral lipids. Induced by type-2 cytokines in response to helminth infection and is required to protect against helminth-induced bacterial invasion of intestinal tissue. May also be involved in the development of the cornified envelope of squamous epithelia; however, additional evidences are required to confirm this result in vivo. The protein is Small proline-rich protein 2A3 of Mus musculus (Mouse).